We begin with the raw amino-acid sequence, 209 residues long: uncharacterized protein (209 aa).

It is found in the plastid. Its subcellular location is the chloroplast. This is an uncharacterized protein from Porphyra purpurea (Red seaweed).